The sequence spans 630 residues: tRNA uridine 5-carboxymethylaminomethyl modification enzyme MnmG (630 aa).

15 to 20 (GAGHAG) is an FAD binding site. NAD(+) is bound at residue 274-288 (GPRYCPSIEDKIVRF).

The protein belongs to the MnmG family. Homodimer. Heterotetramer of two MnmE and two MnmG subunits. It depends on FAD as a cofactor.

It localises to the cytoplasm. Functionally, NAD-binding protein involved in the addition of a carboxymethylaminomethyl (cmnm) group at the wobble position (U34) of certain tRNAs, forming tRNA-cmnm(5)s(2)U34. In Alkaliphilus oremlandii (strain OhILAs) (Clostridium oremlandii (strain OhILAs)), this protein is tRNA uridine 5-carboxymethylaminomethyl modification enzyme MnmG.